Reading from the N-terminus, the 152-residue chain is Protein-export protein SecB (152 aa).

The protein belongs to the SecB family. Homotetramer, a dimer of dimers. One homotetramer interacts with 1 SecA dimer.

It is found in the cytoplasm. In terms of biological role, one of the proteins required for the normal export of preproteins out of the cell cytoplasm. It is a molecular chaperone that binds to a subset of precursor proteins, maintaining them in a translocation-competent state. It also specifically binds to its receptor SecA. The sequence is that of Protein-export protein SecB from Dechloromonas aromatica (strain RCB).